Reading from the N-terminus, the 473-residue chain is O-methyltransferase aclU (473 aa).

Residues aspartate 320 and 354–356 (GDF) each bind S-adenosyl-L-methionine. Residue histidine 373 is the Proton acceptor of the active site.

The protein belongs to the class I-like SAM-binding methyltransferase superfamily. Cation-independent O-methyltransferase family. COMT subfamily.

It participates in mycotoxin biosynthesis. Its function is as follows. O-methyltransferase; part of the gene cluster that mediates the biosynthesis of aspirochlorine (or antibiotic A30641), an unusual halogenated spiro compound with distinctive antifungal properties due to selective inhibition of protein biosynthesis, and which is also active against bacteria, viruses, and murine tumor cells. The non-ribosomal peptide synthetase (NRPS) aclP is responsible the formation of the diketopiperazine (DKP) core from the condensation of 2 phenylalanine residues. One Phe residue is tailored into chlorotyrosine by hydroxylation and chlorination, whereas the second Phe undergoes an unprecedented C-C bond cleavage to be converted into glycine. After formation of the DKP, sulfur is incorporated into the DKP by conjugation with glutathione by aclG, followed by its stepwise degradation to the thiol by aclI, aclJ and aclK, and the dithiol oxidation by aclT. In addition, oxygenases (aclB, aclC, aclL and aclO) and O-methyltransferases (aclM and aclU) act as tailoring enzymes to produce the intermediate dechloroaspirochlorine. Ultimately, chlorination of dechloroaspirochlorine by the halogenase aclH is the last step in the aspirochlorine pathway. The polypeptide is O-methyltransferase aclU (Aspergillus oryzae (strain ATCC 42149 / RIB 40) (Yellow koji mold)).